We begin with the raw amino-acid sequence, 408 residues long: Serine/threonine transporter SstT (408 aa).

9 helical membrane-spanning segments follow: residues 11–31 (LANG…VSLA), 43–63 (FLGS…VFIL), 82–102 (IVVL…LLSM), 141–161 (ALMT…GLAL), 192–212 (IGIF…AIAG), 216–236 (LLAV…PLIV), 290–310 (IPLG…VLTL), 316–336 (LGIQ…AISA), and 363–383 (VAMQ…AAET).

It belongs to the dicarboxylate/amino acid:cation symporter (DAACS) (TC 2.A.23) family.

The protein localises to the cell inner membrane. It catalyses the reaction L-serine(in) + Na(+)(in) = L-serine(out) + Na(+)(out). The enzyme catalyses L-threonine(in) + Na(+)(in) = L-threonine(out) + Na(+)(out). Functionally, involved in the import of serine and threonine into the cell, with the concomitant import of sodium (symport system). The chain is Serine/threonine transporter SstT from Shewanella sp. (strain MR-4).